Consider the following 320-residue polypeptide: Beta-sarcoglycan (320 aa).

Over residues 1 to 10 (MAAAAAAAAA) the composition is skewed to low complexity. Positions 1–34 (MAAAAAAAAATEQQGSNGPVKKSMREKAVERRNV) are disordered. Topologically, residues 1–67 (MAAAAAAAAA…GLRGRKGNLA (67 aa)) are cytoplasmic. Residues 23-34 (SMREKAVERRNV) are compositionally biased toward basic and acidic residues. Residues 68 to 88 (ICVIVLLFILAVINLLITLVI) traverse the membrane as a helical; Signal-anchor for type II membrane protein segment. Residues 89–320 (WAVIRIGPNG…VSDNPCGNTH (232 aa)) are Extracellular-facing. Residues asparagine 160, asparagine 213, and asparagine 260 are each glycosylated (N-linked (GlcNAc...) asparagine). Cystine bridges form between cysteine 290–cysteine 316 and cysteine 292–cysteine 309.

It belongs to the sarcoglycan beta/delta/gamma/zeta family. Cross-link to form 2 major subcomplexes: one consisting of SGCB, SGCD and SGCG and the other consisting of SGCB and SGCD. The association between SGCB and SGCG is particularly strong while SGCA is loosely associated with the other sarcoglycans. In terms of processing, disulfide bonds are present. In terms of tissue distribution, most strongly expressed in skeletal and heart muscle. Also detected in proliferating myoblasts.

It is found in the cell membrane. Its subcellular location is the sarcolemma. The protein localises to the cytoplasm. It localises to the cytoskeleton. Functionally, component of the sarcoglycan complex, a subcomplex of the dystrophin-glycoprotein complex which forms a link between the F-actin cytoskeleton and the extracellular matrix. This chain is Beta-sarcoglycan (Sgcb), found in Mus musculus (Mouse).